The following is a 427-amino-acid chain: Enolase (427 aa).

Gln163 is a binding site for (2R)-2-phosphoglycerate. Residue Glu205 is the Proton donor of the active site. Mg(2+) contacts are provided by Asp242, Glu285, and Asp312. Positions 337, 366, 367, and 388 each coordinate (2R)-2-phosphoglycerate. The active-site Proton acceptor is Lys337.

Belongs to the enolase family. It depends on Mg(2+) as a cofactor.

The protein resides in the cytoplasm. It is found in the secreted. It localises to the cell surface. The catalysed reaction is (2R)-2-phosphoglycerate = phosphoenolpyruvate + H2O. Its pathway is carbohydrate degradation; glycolysis; pyruvate from D-glyceraldehyde 3-phosphate: step 4/5. In terms of biological role, catalyzes the reversible conversion of 2-phosphoglycerate (2-PG) into phosphoenolpyruvate (PEP). It is essential for the degradation of carbohydrates via glycolysis. This chain is Enolase, found in Laribacter hongkongensis (strain HLHK9).